A 137-amino-acid polypeptide reads, in one-letter code: Ribonuclease kappa (137 aa).

Helical transmembrane passes span 52–72 (ACGI…GIFF) and 104–124 (VSYN…FSFC).

The protein belongs to the RNase K family. As to quaternary structure, interacts with the proton translocation complex V0 of the V-ATPase. Interacts with ATP6AP1. As to expression, widely expressed.

The protein resides in the endomembrane system. It is found in the cytoplasmic vesicle. It localises to the clathrin-coated vesicle membrane. Functionally, endoribonuclease which preferentially cleaves ApU and ApG phosphodiester bonds. Hydrolyzes UpU bonds at a lower rate. Regulates the activity of vacuolar (H+)-ATPase (V-ATPase) which is responsible for acidifying and maintaining the pH of intracellular compartments. Required at an early stage of receptor-mediated endocytosis. Its function is as follows. (Microbial infection) Required at an early stage of both clathrin-mediated and clathrin-independent endocytic uptake of a diverse set of viruses, including dengue, West Nile, Sindbis, Rift Valley Fever, influenza, and human rhinoviruses. The protein is Ribonuclease kappa (RNASEK) of Homo sapiens (Human).